Here is a 422-residue protein sequence, read N- to C-terminus: Synaptotagmin-1 (422 aa).

Over 1-57 the chain is Vesicular; sequence MVSESHHEALAAPPVTTVATVLPHNATEPASPGEGKEDAFSKLKEKFMNELHKIPLP. N-linked (GlcNAc...) asparagine glycosylation occurs at N25. Residues 58 to 80 form a helical membrane-spanning segment; the sequence is PWALIAIAIVAVLLVLTCCFCIC. 5 S-palmitoyl cysteine lipidation sites follow: C75, C76, C78, C80, and C83. Topologically, residues 81 to 422 are cytoplasmic; the sequence is KKCLFKKKNK…EVDAMLAVKK (342 aa). The interval 113–142 is disordered; the sequence is TMKDQALKDDDAETGLTDGEEKEEPKEEEK. Residues 122–134 show a composition bias toward acidic residues; it reads DDAETGLTDGEEK. T129 carries the phosphothreonine modification. Residues 136–382 are phospholipid binding; sequence EPKEEEKLGK…AIGKVFVGYN (247 aa). The 120-residue stretch at 142 to 261 folds into the C2 1 domain; sequence KLGKLQYSLD…DFGHVTEEWR (120 aa). Ca(2+) is bound by residues L172, D173, and D179. Y230 is modified (phosphotyrosine). 6 residues coordinate Ca(2+): D231, F232, D233, S236, K237, and D239. A Phosphoserine modification is found at S265. A C2 2 domain is found at 273 to 406; it reads KLGDICFSLR…NPRRPIAQWH (134 aa). Residues D304 and D310 each coordinate Ca(2+). Phosphoserine occurs at positions 343 and 345. The Ca(2+) site is built by D364, D366, and D372.

Belongs to the synaptotagmin family. Homotetramer. Heterodimer; heterodimerizes with SYT2 in presence of calcium. Interacts with SCAMP5. Interacts with STON2. Forms a complex with SV2B, syntaxin 1 and SNAP25. Interacts with SV2A, SV2B and SV2C. Interacts with RIMS1. Interacts with PRRT2. Interacts with DNAJC5 in a phosphorylation-dependent manner. Interacts (via N-terminus) with RAB3A. Interacts with SYT12. Interacts with calmodulin. Interacts with DNM1 (via C-terminal proline-rich domain (PRD)); this interaction facilitates vesicle fission during clathrin-mediated endocytosis (CME). It depends on Ca(2+) as a cofactor. Glycosylated.

The protein localises to the cytoplasmic vesicle. It is found in the secretory vesicle membrane. The protein resides in the secretory vesicle. Its subcellular location is the synaptic vesicle membrane. It localises to the chromaffin granule membrane. The protein localises to the cytoplasm. In terms of biological role, calcium sensor that participates in triggering neurotransmitter release at the synapse. May have a regulatory role in the membrane interactions during trafficking of synaptic vesicles at the active zone of the synapse. It binds acidic phospholipids with a specificity that requires the presence of both an acidic head group and a diacyl backbone. A Ca(2+)-dependent interaction between synaptotagmin and putative receptors for activated protein kinase C has also been reported. It can bind to at least three additional proteins in a Ca(2+)-independent manner; these are neurexins, syntaxin and AP2. Plays a role in dendrite formation by melanocytes. In Bos taurus (Bovine), this protein is Synaptotagmin-1.